Here is a 553-residue protein sequence, read N- to C-terminus: MSERIFIGVAWPYANSQLHLGHVAGAYLPADIFARYHRTRGDEVLMVSGSDMHGTPITIRAEQEGITAAEVAERYHQRFMASWPKLGISWDFYTSTATANHARTAQEMFLSLYEKGYIYKNTVCQPFCSHCNRFLPDRYVEGTCPHCKYEGARGDQCDNCGKPLNAAELLNFRCKNCGNPPEFRETEHFFLKLSAFEEELIRWVETKTHWRTNVLNFTLRYLKEGLKDRAITRDLDWGVPLPLPGYEGKRLYVWFEAVIGYLSASKEWAASKGQPNAWQKYWGVDTKSYYFIGKDNIPFHTIIWPAMLMGKGGLNLPYDVPSNEYLTTESQKFSKSRNNAIWVDDVLSRYGVDTLRYLLSANMPESSDTDFSWREFVRRNNDELVATYGNLAQRVLTMVCRNYDNKVPEYGELDERSLTLIEKTAAMLCETDKALYNCNFREAIRLAMALAQEANRYLDEKAPWKEIKVDKAAAARSLYVAMVALSGLRVAFYPFLPESSGRLSTYLGFGSELEKEGWILKMPVVGQELTPPEPLFKKLEDSVVEEETARMGL.

Positions 12–22 (PYANSQLHLGH) match the 'HIGH' region motif. Residues cysteine 144, cysteine 147, cysteine 157, and cysteine 160 each contribute to the Zn(2+) site. The 'KMSKS' region signature appears at 332–336 (KFSKS). ATP is bound at residue lysine 335.

Belongs to the class-I aminoacyl-tRNA synthetase family. MetG type 1 subfamily. As to quaternary structure, monomer. Zn(2+) is required as a cofactor.

It is found in the cytoplasm. It catalyses the reaction tRNA(Met) + L-methionine + ATP = L-methionyl-tRNA(Met) + AMP + diphosphate. Functionally, is required not only for elongation of protein synthesis but also for the initiation of all mRNA translation through initiator tRNA(fMet) aminoacylation. In Dehalococcoides mccartyi (strain ATCC BAA-2100 / JCM 16839 / KCTC 5957 / BAV1), this protein is Methionine--tRNA ligase.